The following is a 311-amino-acid chain: Probable hydrogen peroxide-inducible genes activator (311 aa).

The region spanning 8-65 is the HTH lysR-type domain; it reads PTIAGLRAFVAVAEKRQFSGAATALGVSQSTLSQVLAALEAGLGTQLVERSTRRVFLT. Positions 25 to 44 form a DNA-binding region, H-T-H motif; that stretch reads FSGAATALGVSQSTLSQVLA.

Belongs to the LysR transcriptional regulatory family.

In terms of biological role, required for the induction the katG gene for catalase. Involved in the response to hydrogen peroxide. This chain is Probable hydrogen peroxide-inducible genes activator (oxyR), found in Mycobacterium avium.